Here is a 757-residue protein sequence, read N- to C-terminus: Inhibitor of nuclear factor kappa-B kinase subunit beta (757 aa).

In terms of domain architecture, Protein kinase spans 15–300; it reads WEMKERLGTG…DPQYGPNGCF (286 aa). ATP is bound by residues 21–29 and K44; that span reads LGTGGFGNV. Catalysis depends on D145, which acts as the Proton acceptor. K163 is covalently cross-linked (Glycyl lysine isopeptide (Lys-Gly) (interchain with G-Cter in ubiquitin)). S177 is modified (phosphoserine; by TBK1 and PKC/PRKCZ). C179 carries the post-translational modification S-nitrosocysteine. S181 carries the post-translational modification Phosphoserine; by TBK1, PKC/PRKCZ and PDPK1. Position 191 is a hydroxyproline (P191). The tract at residues 458–479 is leucine-zipper; sequence LLRNNSCLSKMKNAMASTAQQL. Phosphoserine; by autocatalysis is present on S670. A Phosphoserine modification is found at S672. A phosphoserine; by autocatalysis mark is found at S675, S682, S689, S692, S697, S705, S733, and S740. A disordered region spans residues 682–703; sequence SHPGHLMSQPSSACDSLPDSDK. The tract at residues 737 to 742 is NEMO-binding; the sequence is LDWSWL.

This sequence belongs to the protein kinase superfamily. Ser/Thr protein kinase family. I-kappa-B kinase subfamily. As to quaternary structure, component of the I-kappa-B-kinase (IKK) core complex consisting of CHUK, IKBKB and IKBKG; probably four alpha/CHUK-beta/IKBKB dimers are associated with four gamma/IKBKG subunits. The IKK core complex seems to associate with regulatory or adapter proteins to form a IKK-signalosome holo-complex. The IKK complex associates with TERF2IP/RAP1, leading to promote IKK-mediated phosphorylation of RELA/p65. Part of a complex composed of NCOA2, NCOA3, CHUK/IKKA, IKBKB, IKBKG and CREBBP. Part of a 70-90 kDa complex at least consisting of CHUK/IKKA, IKBKB, NFKBIA, RELA, ELP1 and MAP3K14. Found in a membrane raft complex, at least composed of BCL10, CARD11, DPP4 and IKBKB. Interacts with SQSTM1 through PRKCZ or PRKCI. Forms an NGF-induced complex with IKBKB, PRKCI and TRAF6. May interact with MAVS/IPS1. Interacts with NALP2. Interacts with TICAM1. Interacts with FAF1; the interaction disrupts the IKK complex formation. Interacts with ATM. Part of a ternary complex consisting of TANK, IKBKB and IKBKG. Interacts with NIBP; the interaction is direct. Interacts with ARRB1 and ARRB2. Interacts with TRIM21. Interacts with NLRC5; prevents IKBKB phosphorylation and kinase activity. Interacts with PDPK1. Interacts with EIF2AK2/PKR. The phosphorylated form interacts with PPM1A and PPM1B. Interacts with ZNF268 isoform 2; the interaction is further increased in a TNF-alpha-dependent manner. Interacts with IKBKE. Interacts with ZC3H12A. Interacts with AKAP13. Interacts with LRRC14; disrupts IKBKB-IKBKG interaction preventing I-kappa-B-kinase (IKK) core complex formation and leading to a decrease of IKBKB phosphorylation and NF-kappaB activation. Interacts with SASH1. Interacts with ARFIP2. Interacts with FKBP5. Post-translationally, upon cytokine stimulation, phosphorylated on Ser-177 and Ser-181 by MEKK1 and/or MAP3K14/NIK as well as TBK1 and PRKCZ; which enhances activity. Phosphorylated by MAP3K7/TAK1 in response to NOD1 and NOD2 signaling, promoting activation and phosphorylation of NF-kappa-B inhibitors, leading to NF-kappa-B activation. Once activated, autophosphorylates on the C-terminal serine cluster; which decreases activity and prevents prolonged activation of the inflammatory response. Phosphorylated by the IKK-related kinases TBK1 and IKBKE, which is associated with reduced CHUK/IKKA and IKBKB activity and NF-kappa-B-dependent gene transcription. Dephosphorylated at Ser-177 and Ser-181 by PPM1A and PPM1B. In terms of processing, ubiquitinated. Monoubiquitination involves TRIM21 that leads to inhibition of Tax-induced NF-kappa-B signaling. 'Ser-163' may not serve as a monoubiquitination site. Ubiquitination on 'Ser-163' may modulate phosphorylation on C-terminal serine residues. Hydroxylated by PHD1/EGLN2, loss of hydroxylation under hypoxic conditions results in activation of NF-kappa-B.

The protein localises to the cytoplasm. It localises to the nucleus. It is found in the membrane raft. It carries out the reaction L-seryl-[I-kappa-B protein] + ATP = O-phospho-L-seryl-[I-kappa-B protein] + ADP + H(+). The catalysed reaction is L-seryl-[protein] + ATP = O-phospho-L-seryl-[protein] + ADP + H(+). The enzyme catalyses L-threonyl-[protein] + ATP = O-phospho-L-threonyl-[protein] + ADP + H(+). In terms of biological role, serine kinase that plays an essential role in the NF-kappa-B signaling pathway which is activated by multiple stimuli such as inflammatory cytokines, bacterial or viral products, DNA damages or other cellular stresses. Acts as a part of the canonical IKK complex in the conventional pathway of NF-kappa-B activation. Phosphorylates inhibitors of NF-kappa-B on 2 critical serine residues. These modifications allow polyubiquitination of the inhibitors and subsequent degradation by the proteasome. In turn, free NF-kappa-B is translocated into the nucleus and activates the transcription of hundreds of genes involved in immune response, growth control, or protection against apoptosis. In addition to the NF-kappa-B inhibitors, phosphorylates several other components of the signaling pathway including NEMO/IKBKG, NF-kappa-B subunits RELA and NFKB1, as well as IKK-related kinases TBK1 and IKBKE. IKK-related kinase phosphorylations may prevent the overproduction of inflammatory mediators since they exert a negative regulation on canonical IKKs. Phosphorylates FOXO3, mediating the TNF-dependent inactivation of this pro-apoptotic transcription factor. Also phosphorylates other substrates including NAA10, NCOA3, BCL10 and IRS1. Phosphorylates RIPK1 at 'Ser-25' which represses its kinase activity and consequently prevents TNF-mediated RIPK1-dependent cell death. Phosphorylates the C-terminus of IRF5, stimulating IRF5 homodimerization and translocation into the nucleus. This is Inhibitor of nuclear factor kappa-B kinase subunit beta (Ikbkb) from Rattus norvegicus (Rat).